A 1349-amino-acid chain; its full sequence is Membrane-associated phosphatidylinositol transfer protein 2 (1349 aa).

A disordered region spans residues 262–344; it reads EDGEEATELV…RDSDESSDDE (83 aa). Residues 302–322 are compositionally biased toward low complexity; the sequence is KQWSTSSKSSRSSKRGASPSR. Ser-337, Ser-341, Ser-368, and Ser-589 each carry phosphoserine. The segment covering 618 to 631 has biased composition (gly residues); it reads GGGGGSSGGGGSSG. Residues 618-671 are disordered; the sequence is GGGGGSSGGGGSSGGSSLESSRHLSRSNVDIPRSNGTEDPKRQLPRKRSDSSTY. The residue at position 644 (Ser-644) is a Phosphoserine. A compositionally biased stretch (basic and acidic residues) spans 653-667; sequence GTEDPKRQLPRKRSD. Residues Ser-700, Ser-701, and Ser-702 each carry the phosphoserine modification. The DDHD domain maps to 715–963; it reads FDFEITDLFL…VSFLLRQVMR (249 aa). Omega-N-methylarginine is present on Arg-828. A disordered region spans residues 876–900; it reads LPAPSPTTPGPHPPARKASPGLERA. Over residues 878–888 the composition is skewed to pro residues; the sequence is APSPTTPGPHP. At Ser-1277 the chain carries Phosphoserine. Positions 1296 to 1326 are disordered; that stretch reads TISAQPSGPSHRHERTQSQADGEQRGQRSMS.

This sequence belongs to the PtdIns transfer protein family. PI transfer class IIA subfamily. Interacts with PTK2B via its C-terminus. Interacts with CPNE4 (via VWFA domain). Highly expressed in brain, heart, ovary, testis and thymus. Detected in small intestine, prostate, pancreas, skeletal muscle, liver, colon and placenta.

It localises to the endomembrane system. Its function is as follows. Catalyzes the transfer of phosphatidylinositol and phosphatidylcholine between membranes (in vitro). Binds calcium ions. This is Membrane-associated phosphatidylinositol transfer protein 2 (PITPNM2) from Homo sapiens (Human).